Consider the following 369-residue polypeptide: Ubiquitin-conjugating enzyme E2 Q2 (369 aa).

The tract at residues 117–143 (DQPLPTGQNGTTEEVTSEEEEEEEMAE) is disordered. Residues 131 to 143 (VTSEEEEEEEMAE) are compositionally biased toward acidic residues. Residues 198-362 (QASDRLMKEL…VQIHEKNGWY (165 aa)) form the UBC core domain. Residue Cys-298 is the Glycyl thioester intermediate of the active site.

The protein belongs to the ubiquitin-conjugating enzyme family. Post-translationally, auto-ubiquitinated in vitro. In terms of tissue distribution, detected at embryo implantation sites in the luminal epithelium of pregnant endometrium. Detected at low levels in ovary and liver.

The protein resides in the cytoplasm. The enzyme catalyses S-ubiquitinyl-[E1 ubiquitin-activating enzyme]-L-cysteine + [E2 ubiquitin-conjugating enzyme]-L-cysteine = [E1 ubiquitin-activating enzyme]-L-cysteine + S-ubiquitinyl-[E2 ubiquitin-conjugating enzyme]-L-cysteine.. The protein operates within protein modification; protein ubiquitination. Its function is as follows. Accepts ubiquitin from the E1 complex and catalyzes its covalent attachment to other proteins. In vitro catalyzes 'Lys-48'-linked polyubiquitination. In Oryctolagus cuniculus (Rabbit), this protein is Ubiquitin-conjugating enzyme E2 Q2 (UBE2Q2).